Consider the following 463-residue polypeptide: Bifunctional protein GlmU (463 aa).

The interval 1 to 228 is pyrophosphorylase; the sequence is MEQALSIVVL…PAEVQGVNDR (228 aa). UDP-N-acetyl-alpha-D-glucosamine is bound by residues 10-13, K24, Q75, 80-81, 102-104, G138, E153, N168, and N226; these read LAAG, GT, and YGD. Position 104 (D104) interacts with Mg(2+). N226 provides a ligand contact to Mg(2+). Positions 229–249 are linker; it reads VQLAAAERVWQRRQAEDWMRA. Positions 250 to 463 are N-acetyltransferase; that stretch reads GVTILDPDRF…RPDRGEGSDA (214 aa). UDP-N-acetyl-alpha-D-glucosamine is bound by residues R332 and K350. H362 (proton acceptor) is an active-site residue. Positions 365 and 376 each coordinate UDP-N-acetyl-alpha-D-glucosamine. Residues A379, 385–386, S404, A422, and R439 each bind acetyl-CoA; that span reads NY. A disordered region spans residues 437 to 463; that stretch reads VARSAQRSIHGWRRPGQRPDRGEGSDA. Positions 453–463 are enriched in basic and acidic residues; sequence QRPDRGEGSDA.

In the N-terminal section; belongs to the N-acetylglucosamine-1-phosphate uridyltransferase family. The protein in the C-terminal section; belongs to the transferase hexapeptide repeat family. In terms of assembly, homotrimer. Requires Mg(2+) as cofactor.

The protein localises to the cytoplasm. The enzyme catalyses alpha-D-glucosamine 1-phosphate + acetyl-CoA = N-acetyl-alpha-D-glucosamine 1-phosphate + CoA + H(+). The catalysed reaction is N-acetyl-alpha-D-glucosamine 1-phosphate + UTP + H(+) = UDP-N-acetyl-alpha-D-glucosamine + diphosphate. Its pathway is nucleotide-sugar biosynthesis; UDP-N-acetyl-alpha-D-glucosamine biosynthesis; N-acetyl-alpha-D-glucosamine 1-phosphate from alpha-D-glucosamine 6-phosphate (route II): step 2/2. It participates in nucleotide-sugar biosynthesis; UDP-N-acetyl-alpha-D-glucosamine biosynthesis; UDP-N-acetyl-alpha-D-glucosamine from N-acetyl-alpha-D-glucosamine 1-phosphate: step 1/1. It functions in the pathway bacterial outer membrane biogenesis; LPS lipid A biosynthesis. Its function is as follows. Catalyzes the last two sequential reactions in the de novo biosynthetic pathway for UDP-N-acetylglucosamine (UDP-GlcNAc). The C-terminal domain catalyzes the transfer of acetyl group from acetyl coenzyme A to glucosamine-1-phosphate (GlcN-1-P) to produce N-acetylglucosamine-1-phosphate (GlcNAc-1-P), which is converted into UDP-GlcNAc by the transfer of uridine 5-monophosphate (from uridine 5-triphosphate), a reaction catalyzed by the N-terminal domain. In Alkalilimnicola ehrlichii (strain ATCC BAA-1101 / DSM 17681 / MLHE-1), this protein is Bifunctional protein GlmU.